The following is a 63-amino-acid chain: MKAQELRTKTVEELNAELVNLLGEQFKLRMQAATGQLQQTHQLKQVRRSIAQVKTVLTEKAGA.

The protein belongs to the universal ribosomal protein uL29 family.

The polypeptide is Large ribosomal subunit protein uL29 (Histophilus somni (strain 129Pt) (Haemophilus somnus)).